The primary structure comprises 650 residues: DNA mismatch repair protein MutL (650 aa).

The segment at 374–420 is disordered; it reads SSLPDTQRSQRQPEKAASGQRSSVDAGLSQGSSAHRASQTGLGQSGN. The span at 392-420 shows a compositional bias: polar residues; it reads GQRSSVDAGLSQGSSAHRASQTGLGQSGN.

It belongs to the DNA mismatch repair MutL/HexB family.

Functionally, this protein is involved in the repair of mismatches in DNA. It is required for dam-dependent methyl-directed DNA mismatch repair. May act as a 'molecular matchmaker', a protein that promotes the formation of a stable complex between two or more DNA-binding proteins in an ATP-dependent manner without itself being part of a final effector complex. The polypeptide is DNA mismatch repair protein MutL (Shewanella amazonensis (strain ATCC BAA-1098 / SB2B)).